The sequence spans 388 residues: Mannosyl-3-phosphoglycerate synthase (388 aa).

It belongs to the glycosyltransferase 2 family.

The protein localises to the cytoplasm. It carries out the reaction (2R)-3-phosphoglycerate + GDP-alpha-D-mannose = 2-O-(alpha-D-mannosyl)-3-phosphoglycerate + GDP + H(+). It participates in carbohydrate biosynthesis; 2-(alpha-D-mannosyl)-D-glycerate biosynthesis; 2-(alpha-D-mannosyl)-D-glycerate from GDP-alpha-D-mannose (MPG route): step 1/2. In terms of biological role, transfers a mannosyl group from GDP-mannose to phosphoglycerate to form mannosyl-3-phosphoglycerate (MPG). The protein is Mannosyl-3-phosphoglycerate synthase (mngA) of Aeropyrum pernix (strain ATCC 700893 / DSM 11879 / JCM 9820 / NBRC 100138 / K1).